Consider the following 361-residue polypeptide: Protein RecA (361 aa).

77-84 (GPESSGKT) contributes to the ATP binding site.

This sequence belongs to the RecA family.

Its subcellular location is the cytoplasm. Can catalyze the hydrolysis of ATP in the presence of single-stranded DNA, the ATP-dependent uptake of single-stranded DNA by duplex DNA, and the ATP-dependent hybridization of homologous single-stranded DNAs. It interacts with LexA causing its activation and leading to its autocatalytic cleavage. This Rhizobium rhizogenes (strain K84 / ATCC BAA-868) (Agrobacterium radiobacter) protein is Protein RecA.